Consider the following 417-residue polypeptide: Serine/threonine-protein kinase SBK1 (417 aa).

Positions 53-318 (YELVRELGKG…VFRFLKHELT (266 aa)) constitute a Protein kinase domain. ATP is bound by residues 59-67 (LGKGTYGKV) and K82. Catalysis depends on D174, which acts as the Proton acceptor. Positions 321 to 405 (LRRRPSHRAR…TDGRTDKSKG (85 aa)) are disordered. Over residues 363-382 (PSPPSVGPVVPVPVPVPVPV) the composition is skewed to pro residues.

The protein belongs to the protein kinase superfamily. Ser/Thr protein kinase family.

Its subcellular location is the cytoplasm. It carries out the reaction L-seryl-[protein] + ATP = O-phospho-L-seryl-[protein] + ADP + H(+). The enzyme catalyses L-threonyl-[protein] + ATP = O-phospho-L-threonyl-[protein] + ADP + H(+). May be involved in signal-transduction pathways related to the control of brain development. This is Serine/threonine-protein kinase SBK1 (Sbk1) from Mus musculus (Mouse).